We begin with the raw amino-acid sequence, 544 residues long: Sialidase (544 aa).

The signal sequence occupies residues 1-22 (MKKAVILFSLFCFLCAIPVVQA). BNR repeat units lie at residues 239-250 (SRSTDGGKTWEK), 318-329 (AKSTDDGKTWSA), and 378-389 (MYSKDGGKNWKM). E399 is an active-site residue. Residue R415 coordinates substrate. A BNR 4 repeat occupies 425 to 436 (AITKDLGKTWTE). R479 is a binding site for substrate. One copy of the BNR 5 repeat lies at 485–496 (KISLDGGVTWSP).

Belongs to the glycosyl hydrolase 33 family.

It localises to the periplasm. The catalysed reaction is Hydrolysis of alpha-(2-&gt;3)-, alpha-(2-&gt;6)-, alpha-(2-&gt;8)- glycosidic linkages of terminal sialic acid residues in oligosaccharides, glycoproteins, glycolipids, colominic acid and synthetic substrates.. Its function is as follows. Sialidases have been suggested to be pathogenic factors in microbial infections. This chain is Sialidase (nanH), found in Bacteroides fragilis (strain YCH46).